Here is a 418-residue protein sequence, read N- to C-terminus: Multidrug resistance protein MdtG (418 aa).

Transmembrane regions (helical) follow at residues 19-39 (IGCF…PLYV), 56-76 (LVFS…GGLA), 90-110 (LGMA…QFLI), 113-133 (ALLG…ATQI), 144-164 (TLST…GVLA), 171-191 (PVFF…LLFI), 222-242 (LFVT…ILTL), 251-271 (VANI…AALI), 288-308 (ILIA…FVQT), 317-337 (FLLG…LVYN), and 376-396 (AVFL…GLSL).

It belongs to the major facilitator superfamily. DHA1 family. MdtG (TC 2.A.1.2.20) subfamily.

The protein resides in the cell inner membrane. In Enterobacter lignolyticus (strain SCF1), this protein is Multidrug resistance protein MdtG.